The chain runs to 529 residues: MFS glucose transporter mfs1 (529 aa).

The next 12 helical transmembrane spans lie at 7 to 27 (VYFL…DISS), 52 to 72 (SITC…SFIA), 86 to 106 (ILWI…LLVV), 109 to 129 (VIAG…QAEI), 138 to 158 (VISL…FIQY), 179 to 199 (IPWG…FLFP), 272 to 292 (LQMW…VYIM), 301 to 321 (LLTA…AIIY), 330 to 350 (AILI…GLQG), 375 to 395 (AVGK…ATTI), 415 to 439 (AVSL…PLLW), and 446 to 464 (YMIF…FLTA).

The protein belongs to the major facilitator superfamily. Sugar transporter (TC 2.A.1.1) family.

Its subcellular location is the membrane. Probable MFS glucose transporter; part of the gene cluster 27 that mediates the biosynthesis of asparasone A, a sclerotium-specific anthraquinone pigment important for sclerotial survival. This chain is MFS glucose transporter mfs1, found in Aspergillus flavus (strain ATCC 200026 / FGSC A1120 / IAM 13836 / NRRL 3357 / JCM 12722 / SRRC 167).